The following is a 322-amino-acid chain: Labrum-interacting protein from saliva LIPS-2 (322 aa).

The signal sequence occupies residues 1–20; the sequence is MKTSLPIVVLLTAVISGVHP. Cysteines 27 and 62 form a disulfide. N-linked (GlcNAc...) asparagine glycosylation is found at Asn-168 and Asn-175. Cys-249 and Cys-295 form a disulfide bridge.

As to quaternary structure, monomer in solution. Interacts (via the N-terminal domain) with cuticular protein Cp19 (via the C-terminus). In terms of processing, proteolytically cleaved by human mast cell tryptase and chymase. Glycosylated. As to expression, female salivary gland (at protein level). Female saliva (at protein level).

It localises to the secreted. Its function is as follows. Salivary protein that promotes mosquito blood feeding on the vertebrate host by inducing morphological changes in the mosquito labrum. Interacts with the mosquito labrum end tip and triggers salivation and probing. Modulates enzymatic activities of human tryptase and chymase. The polypeptide is Labrum-interacting protein from saliva LIPS-2 (Aedes albopictus (Asian tiger mosquito)).